The sequence spans 194 residues: ATP-dependent Clp protease proteolytic subunit (194 aa).

Catalysis depends on Ser98, which acts as the Nucleophile. Residue His123 is part of the active site.

It belongs to the peptidase S14 family. Fourteen ClpP subunits assemble into 2 heptameric rings which stack back to back to give a disk-like structure with a central cavity, resembling the structure of eukaryotic proteasomes.

It is found in the cytoplasm. It catalyses the reaction Hydrolysis of proteins to small peptides in the presence of ATP and magnesium. alpha-casein is the usual test substrate. In the absence of ATP, only oligopeptides shorter than five residues are hydrolyzed (such as succinyl-Leu-Tyr-|-NHMec, and Leu-Tyr-Leu-|-Tyr-Trp, in which cleavage of the -Tyr-|-Leu- and -Tyr-|-Trp bonds also occurs).. In terms of biological role, cleaves peptides in various proteins in a process that requires ATP hydrolysis. Has a chymotrypsin-like activity. Plays a major role in the degradation of misfolded proteins. The chain is ATP-dependent Clp protease proteolytic subunit from Syntrophotalea carbinolica (strain DSM 2380 / NBRC 103641 / GraBd1) (Pelobacter carbinolicus).